The primary structure comprises 88 residues: Small ribosomal subunit protein bS20 (88 aa).

This sequence belongs to the bacterial ribosomal protein bS20 family.

Binds directly to 16S ribosomal RNA. The chain is Small ribosomal subunit protein bS20 from Legionella pneumophila (strain Paris).